Reading from the N-terminus, the 349-residue chain is NADH-ubiquinone oxidoreductase chain 2 (349 aa).

9 helical membrane-spanning segments follow: residues 3–23, 66–86, 98–118, 139–159, 178–198, 199–219, 240–260, 274–294, and 319–339; these read PYVL…TFAS, AAAM…EWEI, VMLA…LPEV, FALM…TIGL, ILAY…QFAP, SLTL…FLTL, LAAL…LSGF, GLPL…YFYL, and FTMI…LLPL.

The protein belongs to the complex I subunit 2 family.

Its subcellular location is the mitochondrion inner membrane. It carries out the reaction a ubiquinone + NADH + 5 H(+)(in) = a ubiquinol + NAD(+) + 4 H(+)(out). Core subunit of the mitochondrial membrane respiratory chain NADH dehydrogenase (Complex I) that is believed to belong to the minimal assembly required for catalysis. Complex I functions in the transfer of electrons from NADH to the respiratory chain. The immediate electron acceptor for the enzyme is believed to be ubiquinone. This is NADH-ubiquinone oxidoreductase chain 2 (MT-ND2) from Oncorhynchus mykiss (Rainbow trout).